A 320-amino-acid polypeptide reads, in one-letter code: Homoserine kinase (320 aa).

An ATP-binding site is contributed by 100–110; sequence PLSSGMGSSAA.

This sequence belongs to the GHMP kinase family. Homoserine kinase subfamily.

Its subcellular location is the cytoplasm. The catalysed reaction is L-homoserine + ATP = O-phospho-L-homoserine + ADP + H(+). It participates in amino-acid biosynthesis; L-threonine biosynthesis; L-threonine from L-aspartate: step 4/5. Its function is as follows. Catalyzes the ATP-dependent phosphorylation of L-homoserine to L-homoserine phosphate. This chain is Homoserine kinase, found in Chlorobium phaeobacteroides (strain BS1).